Here is a 74-residue protein sequence, read N- to C-terminus: MVSLPKLSAKIIIRLIYIYQIGISPILGHHCRFSITCSQYGINSIRNFGILKGCWKTCIRILKCHPFNKNDNTQ.

The protein belongs to the UPF0161 family.

The protein resides in the cell inner membrane. Could be involved in insertion of integral membrane proteins into the membrane. This is Putative membrane protein insertion efficiency factor from Blochmanniella floridana.